The following is a 287-amino-acid chain: Phosphatidylserine decarboxylase proenzyme (287 aa).

Residues Asp90, His147, and Ser252 each act as charge relay system; for autoendoproteolytic cleavage activity in the active site. The active-site Schiff-base intermediate with substrate; via pyruvic acid; for decarboxylase activity is Ser252. The residue at position 252 (Ser252) is a Pyruvic acid (Ser); by autocatalysis.

Belongs to the phosphatidylserine decarboxylase family. PSD-B subfamily. Prokaryotic type I sub-subfamily. As to quaternary structure, heterodimer of a large membrane-associated beta subunit and a small pyruvoyl-containing alpha subunit. It depends on pyruvate as a cofactor. In terms of processing, is synthesized initially as an inactive proenzyme. Formation of the active enzyme involves a self-maturation process in which the active site pyruvoyl group is generated from an internal serine residue via an autocatalytic post-translational modification. Two non-identical subunits are generated from the proenzyme in this reaction, and the pyruvate is formed at the N-terminus of the alpha chain, which is derived from the carboxyl end of the proenzyme. The autoendoproteolytic cleavage occurs by a canonical serine protease mechanism, in which the side chain hydroxyl group of the serine supplies its oxygen atom to form the C-terminus of the beta chain, while the remainder of the serine residue undergoes an oxidative deamination to produce ammonia and the pyruvoyl prosthetic group on the alpha chain. During this reaction, the Ser that is part of the protease active site of the proenzyme becomes the pyruvoyl prosthetic group, which constitutes an essential element of the active site of the mature decarboxylase.

It localises to the cell membrane. The catalysed reaction is a 1,2-diacyl-sn-glycero-3-phospho-L-serine + H(+) = a 1,2-diacyl-sn-glycero-3-phosphoethanolamine + CO2. Its pathway is phospholipid metabolism; phosphatidylethanolamine biosynthesis; phosphatidylethanolamine from CDP-diacylglycerol: step 2/2. In terms of biological role, catalyzes the formation of phosphatidylethanolamine (PtdEtn) from phosphatidylserine (PtdSer). The sequence is that of Phosphatidylserine decarboxylase proenzyme from Pseudomonas putida (strain GB-1).